Consider the following 66-residue polypeptide: Small vasohibin-binding protein (66 aa).

Basic and acidic residues predominate over residues 1–23 (MDPPARKEKTKVKESVSRVEKAK). A disordered region spans residues 1–31 (MDPPARKEKTKVKESVSRVEKAKQKSAQQEL). Residues 5 to 52 (ARKEKTKVKESVSRVEKAKQKSAQQELKQRQRAEIYALNRVMTELEQQ) are a coiled coil.

It belongs to the SVBP family. In terms of assembly, interacts with VASH1 and VASH2.

The protein localises to the cytoplasm. It localises to the secreted. Its subcellular location is the cytoskeleton. Its function is as follows. Enhances the tyrosine carboxypeptidase activity of VASH1 and VASH2, thereby promoting the removal of the C-terminal tyrosine residue of alpha-tubulin. This activity is critical for spindle function and accurate chromosome segregation during mitosis since microtubule detyronisation regulates mitotic spindle length and postioning. Also required to enhance the solubility and secretion of VASH1 and VASH2. Plays a role in axon and excitatory synapse formation. This chain is Small vasohibin-binding protein, found in Homo sapiens (Human).